Reading from the N-terminus, the 262-residue chain is MMDMGHKNKIDIKVRLHNYIILYAKRCSMTVSSGNETLTIDEGQIAFIERNIQINVSIKKSDSINPFEIISLDRNLLLSIIRIMEPIYSFQHSYSEEKRGLNKKIFLLSEEEVSIDLFKSIKEMPFGKRKIYSLACLLSAVSDEEALYTSISIASSLSFSDQIRKIVEKNIEKRWRLSDISNNLNLSEIAVRKRLESEKLTFQQILLDIRMHHAAKLLLNSQSYINDVSRLIGISSPSYFIRKFNEYYGITPKKFYLYHKKF.

An HTH araC/xylS-type domain is found at aspartate 161 to tyrosine 258. DNA-binding regions (H-T-H motif) lie at residues serine 178 to lysine 199 and isoleucine 225 to tyrosine 248.

Homodimer.

Functionally, primary regulator of plasmid-encoded virulence genes. Activates the transcription of icsA (virG) and of virB, which is an activator of the ipaABCD virulence regulon. This is Virulence regulon transcriptional activator VirF (virF) from Shigella dysenteriae.